The following is a 693-amino-acid chain: Elongation factor G (693 aa).

Positions 7 to 282 (EKIRNIGITA…SVIDYLPAPT (276 aa)) constitute a tr-type G domain. Residues 16 to 23 (AHIDAGKT), 80 to 84 (DTPGH), and 134 to 137 (NKLD) each bind GTP.

The protein belongs to the TRAFAC class translation factor GTPase superfamily. Classic translation factor GTPase family. EF-G/EF-2 subfamily.

The protein localises to the cytoplasm. Catalyzes the GTP-dependent ribosomal translocation step during translation elongation. During this step, the ribosome changes from the pre-translocational (PRE) to the post-translocational (POST) state as the newly formed A-site-bound peptidyl-tRNA and P-site-bound deacylated tRNA move to the P and E sites, respectively. Catalyzes the coordinated movement of the two tRNA molecules, the mRNA and conformational changes in the ribosome. This is Elongation factor G from Granulibacter bethesdensis (strain ATCC BAA-1260 / CGDNIH1).